The chain runs to 207 residues: LexA repressor (207 aa).

Residues 28–48 (VREIGEAVGLASSSTVHGHLS) constitute a DNA-binding region (H-T-H motif). Residues Ser-130 and Lys-168 each act as for autocatalytic cleavage activity in the active site.

The protein belongs to the peptidase S24 family. As to quaternary structure, homodimer.

The catalysed reaction is Hydrolysis of Ala-|-Gly bond in repressor LexA.. Its function is as follows. Represses a number of genes involved in the response to DNA damage (SOS response), including recA and lexA. In the presence of single-stranded DNA, RecA interacts with LexA causing an autocatalytic cleavage which disrupts the DNA-binding part of LexA, leading to derepression of the SOS regulon and eventually DNA repair. This chain is LexA repressor, found in Staphylococcus aureus (strain MSSA476).